The chain runs to 397 residues: Tryptophan synthase beta chain 1 (397 aa).

The residue at position 94 (Lys94) is an N6-(pyridoxal phosphate)lysine.

This sequence belongs to the TrpB family. In terms of assembly, tetramer of two alpha and two beta chains. Requires pyridoxal 5'-phosphate as cofactor.

It catalyses the reaction (1S,2R)-1-C-(indol-3-yl)glycerol 3-phosphate + L-serine = D-glyceraldehyde 3-phosphate + L-tryptophan + H2O. It participates in amino-acid biosynthesis; L-tryptophan biosynthesis; L-tryptophan from chorismate: step 5/5. In terms of biological role, the beta subunit is responsible for the synthesis of L-tryptophan from indole and L-serine. The sequence is that of Tryptophan synthase beta chain 1 (trpB1) from Archaeoglobus fulgidus (strain ATCC 49558 / DSM 4304 / JCM 9628 / NBRC 100126 / VC-16).